A 136-amino-acid chain; its full sequence is Large ribosomal subunit protein uL22 (136 aa).

This sequence belongs to the universal ribosomal protein uL22 family. As to quaternary structure, part of the 50S ribosomal subunit.

Its function is as follows. This protein binds specifically to 23S rRNA; its binding is stimulated by other ribosomal proteins, e.g. L4, L17, and L20. It is important during the early stages of 50S assembly. It makes multiple contacts with different domains of the 23S rRNA in the assembled 50S subunit and ribosome. Functionally, the globular domain of the protein is located near the polypeptide exit tunnel on the outside of the subunit, while an extended beta-hairpin is found that lines the wall of the exit tunnel in the center of the 70S ribosome. In Bacteroides fragilis (strain YCH46), this protein is Large ribosomal subunit protein uL22.